The primary structure comprises 162 residues: General odorant-binding protein 2 (162 aa).

An N-terminal signal peptide occupies residues 1-18 (MTSKSCLLLVAMVTLTTS). 3 cysteine pairs are disulfide-bonded: Cys-40-Cys-75, Cys-71-Cys-129, and Cys-118-Cys-138.

The protein belongs to the PBP/GOBP family. As to expression, antenna.

Present in the aqueous fluid surrounding olfactory sensory dendrites and are thought to aid in the capture and transport of hydrophobic odorants into and through this fluid. The chain is General odorant-binding protein 2 from Heliothis virescens (Tobacco budworm moth).